Reading from the N-terminus, the 504-residue chain is Bacterial leucyl aminopeptidase (504 aa).

The N-terminal stretch at 1–21 (MKYTKTLLAMVLSATFCQAYA) is a signal peptide. A propeptide spanning residues 22–106 (EDKVWISIGA…AMPTTLASFV (85 aa)) is cleaved from the precursor. Residues His203, Asp223, Glu258, and Asp285 each coordinate Zn(2+). A disulfide bridge connects residues Cys329 and Cys333. A Zn(2+)-binding site is contributed by His362. Positions 406–504 (LEDGVPVTDL…SGASLKASTF (99 aa)) are cleaved as a propeptide — removed in mature form.

The protein belongs to the peptidase M28 family. M28E subfamily. Zn(2+) is required as a cofactor.

The protein localises to the secreted. The catalysed reaction is Release of an N-terminal amino acid, preferentially leucine, but not glutamic or aspartic acids.. The protein is Bacterial leucyl aminopeptidase of Vibrio proteolyticus (Aeromonas proteolytica).